The primary structure comprises 133 residues: C-C motif chemokine 21a (133 aa).

A signal peptide spans 1-23 (MAQMMTLSLLSLVLALCIPWTQG). 3 cysteine pairs are disulfide-bonded: C31-C57, C32-C75, and C103-C122. Residues 86–133 (LMRRLDQPPAPGKQSPGCRKNRGTSKSGKKGKGSKGCKRTEQTQPSRG) are disordered. The interval 98-133 (KQSPGCRKNRGTSKSGKKGKGSKGCKRTEQTQPSRG) is C-terminal basic extension. Residues 104–122 (RKNRGTSKSGKKGKGSKGC) are compositionally biased toward basic residues.

This sequence belongs to the intercrine beta (chemokine CC) family. In terms of assembly, binds to CCR7 and to CXCR3. Interacts with PDPN; relocalizes PDPN to the basolateral membrane. Interacts with GPR174. In terms of tissue distribution, expressed strongly in lung, spleen, thymus, peripheral and mesentric lymph nodes. Also expressed in the testis, kidney, liver, and heart.

It localises to the secreted. Its function is as follows. Inhibits hemopoiesis and stimulates chemotaxis. Chemotactic in vitro for thymocytes and activated T-cells, but not for B-cells, macrophages, or neutrophils. Potent mesangial cell chemoattractant. Shows preferential activity towards naive T-cells. May play a role in mediating homing of lymphocytes to secondary lymphoid organs. In Mus musculus (Mouse), this protein is C-C motif chemokine 21a (Ccl21a).